Consider the following 436-residue polypeptide: UDP-N-acetylmuramate--L-alanine ligase (436 aa).

Residue 111–117 (GTHGKTS) participates in ATP binding.

It belongs to the MurCDEF family.

The protein resides in the cytoplasm. It catalyses the reaction UDP-N-acetyl-alpha-D-muramate + L-alanine + ATP = UDP-N-acetyl-alpha-D-muramoyl-L-alanine + ADP + phosphate + H(+). Its pathway is cell wall biogenesis; peptidoglycan biosynthesis. Cell wall formation. The protein is UDP-N-acetylmuramate--L-alanine ligase of Pediococcus pentosaceus (strain ATCC 25745 / CCUG 21536 / LMG 10740 / 183-1w).